A 283-amino-acid chain; its full sequence is ACT domain-containing protein DS12, chloroplastic (283 aa).

The transit peptide at 1–56 directs the protein to the chloroplast; the sequence is MAEMAVTAALRPCSGVSPAVSGTSHRRRRPAAWRALAPPPPHAGLRLSSPAVRVPR. Positions 14–78 are disordered; it reads SGVSPAVSGT…SNTDTVPTPK (65 aa). Low complexity predominate over residues 48–63; that stretch reads SSPAVRVPRAASSAAV. ACT domains lie at 91–171 and 206–276; these read IVEI…ASSQ and LLVV…LRRP.

It localises to the plastid. The protein localises to the chloroplast. This Oryza sativa subsp. indica (Rice) protein is ACT domain-containing protein DS12, chloroplastic.